Reading from the N-terminus, the 597-residue chain is NADH-quinone oxidoreductase subunits H/I (597 aa).

Residues 1–405 (MPDLSLFGHD…FPTPPVPADA (405 aa)) form an NADH-quinone oxidoreductase subunit H region. Transmembrane regions (helical) follow at residues 12–32 (FWLVVAKSVFLFVYIILIPLV), 82–102 (PIYLLAPVVSVIPAFMAFAVI), 124–144 (VGVLYILAITSIGVYGIVLAG), 170–190 (MALCFAAVFLHAGTMATSGIV), 195–215 (PTWFVFLLLPSFLIYCVSMVG), 260–280 (ALATTLFLGGWSAPWPFNLIP), 286–306 (WWGLLWFTAKVWTFMFVFVWL), 318–338 (FMRLGWQLLIPVSLLWVMLVA), and 351–371 (ATGAQVVVGVALTAAMIGLFL). An NADH-quinone oxidoreductase subunit I region spans residues 406 to 597 (HRVDNPKGGL…APAGAKGGAR (192 aa)). 2 4Fe-4S ferredoxin-type domains span residues 455-485 (LNRHPDGLEKCIGCELCAWACPADAIYVEGA) and 501-530 (RVYQINYLRCIGCGLCIEACPTRALTMTND). [4Fe-4S] cluster is bound by residues Cys465, Cys468, Cys471, Cys475, Cys510, Cys513, Cys516, and Cys520.

In the N-terminal section; belongs to the complex I subunit 1 family. The protein in the C-terminal section; belongs to the complex I 23 kDa subunit family. In terms of assembly, NDH-1 is composed of 13 different subunits. Subunits NuoA, H/I, J, K, L, M, N constitute the membrane sector of the complex. Requires [4Fe-4S] cluster as cofactor.

The protein localises to the cell membrane. It carries out the reaction a quinone + NADH + 5 H(+)(in) = a quinol + NAD(+) + 4 H(+)(out). In terms of biological role, NDH-1 shuttles electrons from NADH, via FMN and iron-sulfur (Fe-S) centers, to quinones in the respiratory chain. The immediate electron acceptor for the enzyme in this species is believed to be ubiquinone. Couples the redox reaction to proton translocation (for every two electrons transferred, four hydrogen ions are translocated across the cytoplasmic membrane), and thus conserves the redox energy in a proton gradient. This subunit may bind ubiquinone. The sequence is that of NADH-quinone oxidoreductase subunits H/I (nuoH/I) from Nocardia farcinica (strain IFM 10152).